A 181-amino-acid polypeptide reads, in one-letter code: NADH-quinone oxidoreductase subunit I (181 aa).

4Fe-4S ferredoxin-type domains are found at residues 52–81 (TRDS…LKKG) and 91–120 (KFFR…LTPD). 8 residues coordinate [4Fe-4S] cluster: cysteine 61, cysteine 64, cysteine 67, cysteine 71, cysteine 100, cysteine 103, cysteine 106, and cysteine 110.

This sequence belongs to the complex I 23 kDa subunit family. NDH-1 is composed of 13 different subunits. Subunits NuoA, H, J, K, L, M, N constitute the membrane sector of the complex. Requires [4Fe-4S] cluster as cofactor.

Its subcellular location is the cell inner membrane. The catalysed reaction is a quinone + NADH + 5 H(+)(in) = a quinol + NAD(+) + 4 H(+)(out). Functionally, NDH-1 shuttles electrons from NADH, via FMN and iron-sulfur (Fe-S) centers, to quinones in the respiratory chain. The immediate electron acceptor for the enzyme in this species is believed to be ubiquinone. Couples the redox reaction to proton translocation (for every two electrons transferred, four hydrogen ions are translocated across the cytoplasmic membrane), and thus conserves the redox energy in a proton gradient. The chain is NADH-quinone oxidoreductase subunit I from Blochmanniella pennsylvanica (strain BPEN).